Reading from the N-terminus, the 1700-residue chain is RNA replication protein (1700 aa).

The Alphavirus-like MT domain occupies 299 to 462; the sequence is DPYAVRSHTH…VHEVKNSNWL (164 aa). Positions 842-991 constitute a (+)RNA virus helicase ATP-binding domain; it reads VLITSDEAGE…LFAPLSPFYL (150 aa). 868–875 provides a ligand contact to ATP; that stretch reads GAGGAGKT. A (+)RNA virus helicase C-terminal domain is found at 992–1128; that stretch reads NWTWRMTRPV…LVREYELNQP (137 aa). The region spanning 1369–1480 is the RdRp catalytic domain; the sequence is GHATINDCEA…SVKPAFKELE (112 aa).

The protein belongs to the potexvirus/carlavirus RNA replication protein family.

The catalysed reaction is RNA(n) + a ribonucleoside 5'-triphosphate = RNA(n+1) + diphosphate. The enzyme catalyses ATP + H2O = ADP + phosphate + H(+). In terms of biological role, RNA replication. The protein possibly functions as an ATP-binding helicase. This Sclerotinia sclerotiorum (White mold) protein is RNA replication protein.